Consider the following 198-residue polypeptide: IMP cyclohydrolase (198 aa).

The protein belongs to the archaeal IMP cyclohydrolase family.

It catalyses the reaction IMP + H2O = 5-formamido-1-(5-phospho-D-ribosyl)imidazole-4-carboxamide. It functions in the pathway purine metabolism; IMP biosynthesis via de novo pathway; IMP from 5-formamido-1-(5-phospho-D-ribosyl)imidazole-4-carboxamide: step 1/1. Functionally, catalyzes the cyclization of 5-formylamidoimidazole-4-carboxamide ribonucleotide to IMP. This chain is IMP cyclohydrolase, found in Methanopyrus kandleri (strain AV19 / DSM 6324 / JCM 9639 / NBRC 100938).